The primary structure comprises 966 residues: DNA mismatch repair protein MutS (966 aa).

709 to 716 contributes to the ATP binding site; it reads GPNMAGKS. A disordered region spans residues 894–914; sequence EGQRPPSSPAQPPAPPAPVVV. A compositionally biased stretch (pro residues) spans 899 to 912; sequence PSSPAQPPAPPAPV.

Belongs to the DNA mismatch repair MutS family.

In terms of biological role, this protein is involved in the repair of mismatches in DNA. It is possible that it carries out the mismatch recognition step. This protein has a weak ATPase activity. The chain is DNA mismatch repair protein MutS from Chloroflexus aurantiacus (strain ATCC 29366 / DSM 635 / J-10-fl).